The chain runs to 115 residues: Ribonuclease P protein component (115 aa).

Belongs to the RnpA family. As to quaternary structure, consists of a catalytic RNA component (M1 or rnpB) and a protein subunit.

It carries out the reaction Endonucleolytic cleavage of RNA, removing 5'-extranucleotides from tRNA precursor.. Functionally, RNaseP catalyzes the removal of the 5'-leader sequence from pre-tRNA to produce the mature 5'-terminus. It can also cleave other RNA substrates such as 4.5S RNA. The protein component plays an auxiliary but essential role in vivo by binding to the 5'-leader sequence and broadening the substrate specificity of the ribozyme. This Bacillus cereus (strain AH187) protein is Ribonuclease P protein component.